The sequence spans 251 residues: Phosphate import ATP-binding protein PstB (251 aa).

An ABC transporter domain is found at Ile5–Leu246. Gly37 to Thr44 is an ATP binding site.

Belongs to the ABC transporter superfamily. Phosphate importer (TC 3.A.1.7) family. As to quaternary structure, the complex is composed of two ATP-binding proteins (PstB), two transmembrane proteins (PstC and PstA) and a solute-binding protein (PstS).

The protein localises to the cell inner membrane. It catalyses the reaction phosphate(out) + ATP + H2O = ADP + 2 phosphate(in) + H(+). Its function is as follows. Part of the ABC transporter complex PstSACB involved in phosphate import. Responsible for energy coupling to the transport system. This chain is Phosphate import ATP-binding protein PstB, found in Thermotoga maritima (strain ATCC 43589 / DSM 3109 / JCM 10099 / NBRC 100826 / MSB8).